A 906-amino-acid polypeptide reads, in one-letter code: MDEHFQPCLDGIDYDDFSFGSHMVEQKEPLMETAVGPYLVIIEQPKQRGFRFRYVCEGPSHGGLPGASSEKGHKTYPTVKICNYEGMARIEVDLVTHSDPPRVHAHSLVGKQCNEAGNCVAIVGPKDMTAQFSNLGVLHVTKKNMMEIMKEKLKKQKTRNTNGLLTEAELREIELEAKELKKVMDLSIVRLRFTAYLRDSSGNFTLALQPVISDPIHDSKSPGASNLKISRMDKTAGSVRGGDEVYLLCDKVQKDDIEVRFYEDDENGWQASGDFSPTDVHKQYAIVFRTPPYHKPKIDRPVTVFLQLKRKRGGDVSDSKQFTYYPVVEDKEEVERNRKKVLPQFPQHFGGGSHMGGAGGAGGFGAGGGGNLSFPYSSGLGYNNLYSSSPHPVGCGYQGGVQMKAASERDGDDRQAPTESTYCRELQRHRHLCHLWLLARRNAHALLDYSVTADPRMLLAVQRHLAASQDENGDTPLHLAIIHEQTAVIKQLIEVVVSIPSQQIINITNNLQQTPLHLAVITKQPQVVQLLLEAHANPTLLDRYGNSLLHLALQAADEEMLRMLLAHLASATPYLLHLPNFQGLLPVHLAVKAKSPACLDLLVRKGADVNGVERQGGRTPLHLAVEMENLNMATHLVKKLGANVNSRTFAGNTPLHLAAGLGSPTLTKLLLKAGADVQRENDEPVSPSSVRVPSSDTDGDPEEQEQEQAMELGEPALSPHPTPEEEQEEAGPRQRLHTALDLTRSQKVRDILLQASQPSPPILSCPPPPSRNHLLSLDTDALQGLEQLLNQYGSGSDWMELAKRLGLCSLVETYKTTPSPASALRSYELPGGSLGGLLEALDSMGLRGAVRMLRKPEPLEKLQSTEVKEDSAYGSESVEEEQAARLKPRPVPEGELPHSQQQQQVH.

The region spanning 34 to 223 is the RHD domain; it reads AVGPYLVIIE…DPIHDSKSPG (190 aa). The short motif at 336–340 is the Nuclear localization signal element; the sequence is RNRKK. Residues 345–374 form a GRR region; the sequence is FPQHFGGGSHMGGAGGAGGFGAGGGGNLSF. ANK repeat units lie at residues 472–501, 511–540, 544–573, 582–611, 616–646, and 650–679; these read NGDT…SIPS, LQQT…NPTL, YGNS…SATP, QGLL…DVNG, GGRT…NVNS, and AGNT…DVQR. Disordered stretches follow at residues 677–734 and 857–906; these read VQRE…GPRQ and EPLE…QQVH. Residues 684 to 695 are compositionally biased toward low complexity; sequence PVSPSSVRVPSS. Residues 697–708 show a composition bias toward acidic residues; that stretch reads TDGDPEEQEQEQ. A Death domain is found at 771–857; sequence RNHLLSLDTD…GAVRMLRKPE (87 aa).

As to quaternary structure, component of the NF-kappa-B RelB-p52 complex. While translation occurs, the particular unfolded structure after the GRR repeat promotes the generation of p52 making it an acceptable substrate for the proteasome. This process is known as cotranslational processing. The processed form is active and the unprocessed form acts as an inhibitor (I kappa B-like), being able to form cytosolic complexes with NF-kappa B, trapping it in the cytoplasm. Complete folding of the region downstream of the GRR repeat precludes processing. In terms of processing, constitutive processing is tightly suppressed by its C-terminal processing inhibitory domain, named PID, which contains the death domain.

The protein localises to the nucleus. The protein resides in the cytoplasm. Its function is as follows. NF-kappa-B is a pleiotropic transcription factor present in almost all cell types and is the endpoint of a series of signal transduction events that are initiated by a vast array of stimuli related to many biological processes such as inflammation, immunity, differentiation, cell growth, tumorigenesis and apoptosis. NF-kappa-B is a homo- or heterodimeric complex formed by the Rel-like domain-containing proteins RELA/p65, RELB, NFKB1/p105, NFKB1/p50, REL and NFKB2/p52. The dimers bind at kappa-B sites in the DNA of their target genes and the individual dimers have distinct preferences for different kappa-B sites that they can bind with distinguishable affinity and specificity. Different dimer combinations act as transcriptional activators or repressors, respectively. NF-kappa-B is controlled by various mechanisms of post-translational modification and subcellular compartmentalization as well as by interactions with other cofactors or corepressors. NF-kappa-B complexes are held in the cytoplasm in an inactive state complexed with members of the NF-kappa-B inhibitor (I-kappa-B) family. In a conventional activation pathway, I-kappa-B is phosphorylated by I-kappa-B kinases (IKKs) in response to different activators, subsequently degraded thus liberating the active NF-kappa-B complex which translocates to the nucleus. In a non-canonical activation pathway, the MAP3K14-activated CHUK/IKKA homodimer phosphorylates NFKB2/p100 associated with RelB, inducing its proteolytic processing to NFKB2/p52 and the formation of NF-kappa-B RelB-p52 complexes. The NF-kappa-B heterodimeric RelB-p52 complex is a transcriptional activator. NFKB2 appears to have dual functions such as cytoplasmic retention of attached NF-kappa-B proteins by p100 and generation of p52 by a cotranslational processing. The proteasome-mediated process ensures the production of both p52 and p100 and preserves their independent function. p52 binds to the kappa-B consensus sequence 5'-GGRNNYYCC-3', located in the enhancer region of genes involved in immune response and acute phase reactions. In concert with RELB, may play a role in the regulation of the circadian clock. The protein is Nuclear factor NF-kappa-B p100 subunit (NFKB2) of Gallus gallus (Chicken).